Reading from the N-terminus, the 472-residue chain is Phenylalanine--tRNA ligase, mitochondrial (472 aa).

Substrate-binding positions include 157-160 (SAHQ), Arg179, 186-188 (QHY), and 193-195 (QLE). The residue at position 202 (Lys202) is an N6-acetyllysine. Substrate-binding residues include Glu287 and Phe312. In terms of domain architecture, FDX-ACB spans 379–471 (SKYPAVFNDI…AVQLLGVEGR (93 aa)).

The protein belongs to the class-II aminoacyl-tRNA synthetase family. In terms of assembly, monomer. As to expression, mainly expressed in the Purkinje cell of cerebellum.

It is found in the mitochondrion matrix. The protein resides in the mitochondrion. It catalyses the reaction tRNA(Phe) + L-phenylalanine + ATP = L-phenylalanyl-tRNA(Phe) + AMP + diphosphate + H(+). Is responsible for the charging of tRNA(Phe) with phenylalanine in mitochondrial translation. To a lesser extent, also catalyzes direct attachment of m-Tyr (an oxidized version of Phe) to tRNA(Phe), thereby opening the way for delivery of the misacylated tRNA to the ribosome and incorporation of ROS-damaged amino acid into proteins. This is Phenylalanine--tRNA ligase, mitochondrial (Fars2) from Rattus norvegicus (Rat).